The chain runs to 150 residues: PTTG1IP family member 2 (150 aa).

A signal peptide spans 1-19 (MCWLRAWSHILLPVFLSVA). The Extracellular segment spans residues 20–98 (LIQLIFNLSD…SIFWANCNVD (79 aa)). N26 carries an N-linked (GlcNAc...) asparagine glycan. Residues 99–119 (LFGIVMLILIVILALAFLWYC) traverse the membrane as a helical segment. Topologically, residues 120–150 (LAYYFYMQQHMALYARHGQVPVYNWDAPGDW) are cytoplasmic.

It localises to the membrane. This is PTTG1IP family member 2 from Mus musculus (Mouse).